Consider the following 115-residue polypeptide: Putative type I restriction enzyme MpnIIP endonuclease subunit middle part (115 aa).

Functionally, the middle section of a putative type I restriction enzyme that if reconstituted might recognize 5'-GAN(7)TAY-3' and cleave a random distance away. Subunit R is required for both nuclease and ATPase activities, but not for modification. In Mycoplasma pneumoniae (strain ATCC 29342 / M129 / Subtype 1) (Mycoplasmoides pneumoniae), this protein is Putative type I restriction enzyme MpnIIP endonuclease subunit middle part.